The sequence spans 304 residues: N-acetylglucosaminyl-phosphatidylinositol de-N-acetylase (304 aa).

Residues 1–20 are Lumenal-facing; the sequence is MKMLRRTKVNFSKLLYKITK. The chain crosses the membrane as a helical span at residues 21 to 38; sequence LAIVLTILYIYFTPKIVS. The Cytoplasmic segment spans residues 39–304; that stretch reads RNNASLQHIF…FVNEFDVYTY (266 aa).

It belongs to the PIGL family.

The protein resides in the endoplasmic reticulum membrane. It catalyses the reaction a 6-(N-acetyl-alpha-D-glucosaminyl)-1-(1,2-diacyl-sn-glycero-3-phospho)-1D-myo-inositol + H2O = a 6-(alpha-D-glucosaminyl)-1-(1,2-diacyl-sn-glycero-3-phospho)-1D-myo-inositol + acetate. It functions in the pathway glycolipid biosynthesis; glycosylphosphatidylinositol-anchor biosynthesis. Involved in the second step of GPI biosynthesis. De-N-acetylation of N-acetylglucosaminyl-phosphatidylinositol. The polypeptide is N-acetylglucosaminyl-phosphatidylinositol de-N-acetylase (GPI12) (Saccharomyces cerevisiae (strain ATCC 204508 / S288c) (Baker's yeast)).